The primary structure comprises 302 residues: Ribosomal RNA small subunit methyltransferase H (302 aa).

Residues 32 to 34, Asp51, Phe78, Asp97, and Gln104 contribute to the S-adenosyl-L-methionine site; that span reads GGH.

Belongs to the methyltransferase superfamily. RsmH family.

The protein localises to the cytoplasm. It carries out the reaction cytidine(1402) in 16S rRNA + S-adenosyl-L-methionine = N(4)-methylcytidine(1402) in 16S rRNA + S-adenosyl-L-homocysteine + H(+). In terms of biological role, specifically methylates the N4 position of cytidine in position 1402 (C1402) of 16S rRNA. The polypeptide is Ribosomal RNA small subunit methyltransferase H (Nitratiruptor sp. (strain SB155-2)).